The following is a 540-amino-acid chain: NEDD8-activating enzyme E1 regulatory subunit AXR1 (540 aa).

It belongs to the ubiquitin-activating E1 family. ULA1 subfamily. In terms of assembly, heterodimer of ECR1 and AXR1. The complex binds to RUB1/NEDD8 and RCE1. In terms of tissue distribution, expressed in shoot, root and floral meristems, in vascular tissues of cotyledons and mature leaves, and in the stele of the root. Expressed at higher levels on the lower side of an emerging root during germination and at higher levels on the underside of the apical hook.

Its subcellular location is the nucleus. Its pathway is protein modification; protein neddylation. Its function is as follows. Regulatory subunit of the dimeric ECR1-AXR1 E1 enzyme. E1 activates RUB1/NEDD8 by first adenylating its C-terminal glycine residue with ATP, thereafter linking this residue to the side chain of the catalytic cysteine, yielding a RUB1-ECR1 thioester and free AMP. E1 finally transfers RUB1 to the catalytic cysteine of RCE1. Plays an important role in auxin response. Regulates the chromosomal localization of meiotic recombination by crossovers (COs) and subsequent synapsis, probably through the activation of a CRL4 complex. Required for E3-mediated protein degradation in response to auxin, jasmonic acid and cold stress. Required for the COP1-COP10-CSN-mediated repression of photomorphogenesis in the dark. May function redundantly with AXL1 in the RUB conjugating pathway. Seems not to be functionally equivalent to AXL1 in vivo. In Arabidopsis thaliana (Mouse-ear cress), this protein is NEDD8-activating enzyme E1 regulatory subunit AXR1.